A 587-amino-acid polypeptide reads, in one-letter code: Putative gustatory receptor 59b (587 aa).

Residues 1-4 (MPSY) are Cytoplasmic-facing. A helical transmembrane segment spans residues 5 to 25 (MAFTPYIMFSTNYAAIAYILI). The Extracellular portion of the chain corresponds to 26 to 62 (SRCYRDSMLLDLQRITLEVNREMLRTGKKMNSLIRRM). The chain crosses the membrane as a helical span at residues 63–83 (FFLKTFTLTYSCLSYILAVLV). Over 84–97 (YQWRAQNWSNLFNG) the chain is Cytoplasmic. The helical transmembrane segment at 98-118 (LLVNISLTILVVTTFFYFVSL) threads the bilayer. Topologically, residues 119 to 277 (MHVARGFDFV…CGLYPVNKAK (159 aa)) are extracellular. An N-linked (GlcNAc...) asparagine glycan is attached at Asn-159. The chain crosses the membrane as a helical span at residues 278 to 298 (WLEMVASIVVHSIMLFQFHLV). At 299–309 (MRGGYTTLFSR) the chain is on the cytoplasmic side. A helical transmembrane segment spans residues 310–330 (TYALLANIITLTMLPIVMWQV). Residues 331 to 403 (RSVFLAKRHY…GIDGVRRSLR (73 aa)) lie on the Extracellular side of the membrane. A helical membrane pass occupies residues 404–424 (ILLFVKFFTLSWLCITDIIFL). Topologically, residues 425–518 (FYSSDAVIWV…IYAPQMLATR (94 aa)) are cytoplasmic. The helical transmembrane segment at 519–539 (FDHFVIGVIQAYWGAVFTFDL) threads the bilayer. The Extracellular portion of the chain corresponds to 540–587 (STSFLWVVYGSVQYHVRSLDYYLIDYMCDVAVEYHDSARHSWSEKECY).

The protein belongs to the insect chemoreceptor superfamily. Gustatory receptor (GR) family. Gr22e subfamily.

The protein resides in the cell membrane. Functionally, probable gustatory receptor which mediates acceptance or avoidance behavior, depending on its substrates. This is Putative gustatory receptor 59b from Drosophila erecta (Fruit fly).